The following is a 263-amino-acid chain: Tryptophan synthase alpha chain (263 aa).

Residues Glu49 and Asp60 each act as proton acceptor in the active site.

Belongs to the TrpA family. In terms of assembly, tetramer of two alpha and two beta chains.

It carries out the reaction (1S,2R)-1-C-(indol-3-yl)glycerol 3-phosphate + L-serine = D-glyceraldehyde 3-phosphate + L-tryptophan + H2O. It participates in amino-acid biosynthesis; L-tryptophan biosynthesis; L-tryptophan from chorismate: step 5/5. In terms of biological role, the alpha subunit is responsible for the aldol cleavage of indoleglycerol phosphate to indole and glyceraldehyde 3-phosphate. This Cereibacter sphaeroides (strain ATCC 17025 / ATH 2.4.3) (Rhodobacter sphaeroides) protein is Tryptophan synthase alpha chain.